The chain runs to 455 residues: Chromosomal replication initiator protein DnaA (455 aa).

Residues 1 to 74 (MFNFEKFWQH…IQSAYGYAGV (74 aa)) form a domain I, interacts with DnaA modulators region. Residues 74–117 (VELLPVFQISEDSDTPERIVTPEPQHNLQTTPTRAPQREFAKDL) form a domain II region. The domain III, AAA+ region stretch occupies residues 118-334 (KLNEKYTFDN…GALVKVQAYA (217 aa)). G162, G164, K165, and T166 together coordinate ATP. The domain IV, binds dsDNA stretch occupies residues 335–455 (TIEKADIDIN…VFDLKQMLEH (121 aa)).

This sequence belongs to the DnaA family. Oligomerizes as a right-handed, spiral filament on DNA at oriC.

The protein resides in the cytoplasm. Plays an essential role in the initiation and regulation of chromosomal replication. ATP-DnaA binds to the origin of replication (oriC) to initiate formation of the DNA replication initiation complex once per cell cycle. Binds the DnaA box (a 9 base pair repeat at the origin) and separates the double-stranded (ds)DNA. Forms a right-handed helical filament on oriC DNA; dsDNA binds to the exterior of the filament while single-stranded (ss)DNA is stabiized in the filament's interior. The ATP-DnaA-oriC complex binds and stabilizes one strand of the AT-rich DNA unwinding element (DUE), permitting loading of DNA polymerase. After initiation quickly degrades to an ADP-DnaA complex that is not apt for DNA replication. Binds acidic phospholipids. The polypeptide is Chromosomal replication initiator protein DnaA (Lactobacillus acidophilus (strain ATCC 700396 / NCK56 / N2 / NCFM)).